We begin with the raw amino-acid sequence, 160 residues long: Nucleotide-binding protein PSHAa2277 (160 aa).

The protein belongs to the YajQ family.

Functionally, nucleotide-binding protein. The polypeptide is Nucleotide-binding protein PSHAa2277 (Pseudoalteromonas translucida (strain TAC 125)).